The following is a 173-amino-acid chain: Fimbrial protein PrsE (173 aa).

Residues 1–24 (MKKIRGLCLPVMLGAVLMSQHVHA) form the signal peptide.

It localises to the secreted. The protein localises to the fimbrium. Fimbriae (also called pili), polar filaments radiating from the surface of the bacterium to a length of 0.5-1.5 micrometers and numbering 100-300 per cell, enable bacteria to colonize the epithelium of specific host organs. The sequence is that of Fimbrial protein PrsE (prsE) from Escherichia coli.